We begin with the raw amino-acid sequence, 165 residues long: Transcription antitermination protein NusB (165 aa).

This sequence belongs to the NusB family.

Functionally, involved in transcription antitermination. Required for transcription of ribosomal RNA (rRNA) genes. Binds specifically to the boxA antiterminator sequence of the ribosomal RNA (rrn) operons. The protein is Transcription antitermination protein NusB of Nitratidesulfovibrio vulgaris (strain DSM 19637 / Miyazaki F) (Desulfovibrio vulgaris).